The chain runs to 38 residues: Spheniscin-1 (38 aa).

3 disulfides stabilise this stretch: cysteine 5–cysteine 33, cysteine 12–cysteine 27, and cysteine 17–cysteine 34.

As to quaternary structure, monomer. Secreted into the stomach cavity.

The protein resides in the secreted. Its function is as follows. Has antifungal activity and antibacterial activity against Gram-positive and Gram-negative bacteria. Involved in the process of food preservation in the stomach during the incubation fast. May also be present during infection. The chain is Spheniscin-1 from Aptenodytes patagonicus (King penguin).